A 267-amino-acid chain; its full sequence is Thiamine thiazole synthase (267 aa).

Residues serine 41, glutamate 60–arginine 61, glycine 68, valine 132, and histidine 160–aspartate 162 contribute to the NAD(+) site. Fe cation-binding residues include aspartate 162 and histidine 177. NAD(+) is bound at residue methionine 227. Glycine is bound at residue arginine 237.

The protein belongs to the THI4 family. In terms of assembly, homooctamer; tetramer of dimers. Fe(2+) serves as cofactor.

The catalysed reaction is hydrogen sulfide + glycine + NAD(+) = ADP-5-ethyl-4-methylthiazole-2-carboxylate + nicotinamide + 3 H2O + H(+). It functions in the pathway cofactor biosynthesis; thiamine diphosphate biosynthesis. In terms of biological role, involved in the biosynthesis of the thiazole moiety of thiamine. Catalyzes the conversion of NAD and glycine to adenosine diphosphate 5-(2-hydroxyethyl)-4-methylthiazole-2-carboxylate (ADT), an adenylated thiazole intermediate, using free sulfide as a source of sulfur. The chain is Thiamine thiazole synthase from Saccharolobus solfataricus (strain ATCC 35092 / DSM 1617 / JCM 11322 / P2) (Sulfolobus solfataricus).